The primary structure comprises 258 residues: Small ribosomal subunit protein uS2 (258 aa).

This sequence belongs to the universal ribosomal protein uS2 family.

This is Small ribosomal subunit protein uS2 from Leuconostoc citreum (strain KM20).